We begin with the raw amino-acid sequence, 489 residues long: Rhamnulokinase (489 aa).

Position 13–17 (13–17) interacts with ATP; sequence ASSGR. Cys68 and Cys222 are oxidised to a cystine. Substrate contacts are provided by residues Gly83 and 236–238; that span reads HDT. Residue Asp237 is the Proton acceptor of the active site. Residue Thr259 coordinates ATP. Substrate is bound at residue Asn296. Gln304 is an ATP binding site. The cysteines at positions 353 and 370 are disulfide-linked. Gly402 is a binding site for ATP. Cys413 and Cys417 form a disulfide bridge.

Belongs to the rhamnulokinase family. It depends on Mg(2+) as a cofactor.

It carries out the reaction L-rhamnulose + ATP = L-rhamnulose 1-phosphate + ADP + H(+). Its pathway is carbohydrate degradation; L-rhamnose degradation; glycerone phosphate from L-rhamnose: step 2/3. Functionally, involved in the catabolism of L-rhamnose (6-deoxy-L-mannose). Catalyzes the transfer of the gamma-phosphate group from ATP to the 1-hydroxyl group of L-rhamnulose to yield L-rhamnulose 1-phosphate. The sequence is that of Rhamnulokinase from Shigella flexneri serotype 5b (strain 8401).